A 596-amino-acid chain; its full sequence is Aspartate--tRNA(Asp/Asn) ligase (596 aa).

Residue Glu-175 coordinates L-aspartate. Residues 199-202 form an aspartate region; that stretch reads QQYK. Positions 221 and 454 each coordinate L-aspartate. Residue 221–223 participates in ATP binding; sequence RDE. Glu-488 contributes to the ATP binding site. Arg-495 lines the L-aspartate pocket. 540-543 is a binding site for ATP; the sequence is GIDR.

This sequence belongs to the class-II aminoacyl-tRNA synthetase family. Type 1 subfamily. As to quaternary structure, homodimer.

It is found in the cytoplasm. It carries out the reaction tRNA(Asx) + L-aspartate + ATP = L-aspartyl-tRNA(Asx) + AMP + diphosphate. Functionally, aspartyl-tRNA synthetase with relaxed tRNA specificity since it is able to aspartylate not only its cognate tRNA(Asp) but also tRNA(Asn). Reaction proceeds in two steps: L-aspartate is first activated by ATP to form Asp-AMP and then transferred to the acceptor end of tRNA(Asp/Asn). The polypeptide is Aspartate--tRNA(Asp/Asn) ligase (Rhizobium leguminosarum bv. trifolii (strain WSM2304)).